Consider the following 354-residue polypeptide: Uptake hydrogenase small subunit (354 aa).

The segment at residues 1 to 44 is a signal peptide (tat-type signal); the sequence is MSQLETXYDVMRRQGITRRSFLKYCSLTGRPCLGPTFAPQIAHA. [4Fe-4S] cluster contacts are provided by C61, C64, C156, C190, H228, S231, C256, and C262. Residues C271, C290, and C293 each coordinate [3Fe-4S] cluster.

It belongs to the [NiFe]/[NiFeSe] hydrogenase small subunit family. As to quaternary structure, heterodimer of a large and a small subunit. [4Fe-4S] cluster serves as cofactor. It depends on [3Fe-4S] cluster as a cofactor. Predicted to be exported by the Tat system. The position of the signal peptide cleavage has not been experimentally proven.

The protein resides in the cell membrane. It catalyses the reaction H2 + A = AH2. In terms of biological role, this enzyme recycles the H(2) produced by nitrogenase to increase the production of ATP and to protect nitrogenase against inhibition or damage by O(2) under carbon- or phosphate-limited conditions. The protein is Uptake hydrogenase small subunit (hupA) of Azotobacter chroococcum mcd 1.